The following is a 224-amino-acid chain: Phosphoribosylformylglycinamidine synthase subunit PurQ (224 aa).

In terms of domain architecture, Glutamine amidotransferase type-1 spans 2–224 (KIAVIVFPGS…SLLEEGKVKG (223 aa)). The active-site Nucleophile is cysteine 86. Catalysis depends on residues histidine 195 and glutamate 197.

As to quaternary structure, part of the FGAM synthase complex composed of 1 PurL, 1 PurQ and 2 PurS subunits.

The protein resides in the cytoplasm. The enzyme catalyses N(2)-formyl-N(1)-(5-phospho-beta-D-ribosyl)glycinamide + L-glutamine + ATP + H2O = 2-formamido-N(1)-(5-O-phospho-beta-D-ribosyl)acetamidine + L-glutamate + ADP + phosphate + H(+). The catalysed reaction is L-glutamine + H2O = L-glutamate + NH4(+). It functions in the pathway purine metabolism; IMP biosynthesis via de novo pathway; 5-amino-1-(5-phospho-D-ribosyl)imidazole from N(2)-formyl-N(1)-(5-phospho-D-ribosyl)glycinamide: step 1/2. Part of the phosphoribosylformylglycinamidine synthase complex involved in the purines biosynthetic pathway. Catalyzes the ATP-dependent conversion of formylglycinamide ribonucleotide (FGAR) and glutamine to yield formylglycinamidine ribonucleotide (FGAM) and glutamate. The FGAM synthase complex is composed of three subunits. PurQ produces an ammonia molecule by converting glutamine to glutamate. PurL transfers the ammonia molecule to FGAR to form FGAM in an ATP-dependent manner. PurS interacts with PurQ and PurL and is thought to assist in the transfer of the ammonia molecule from PurQ to PurL. The sequence is that of Phosphoribosylformylglycinamidine synthase subunit PurQ from Ligilactobacillus salivarius (strain UCC118) (Lactobacillus salivarius).